Consider the following 414-residue polypeptide: Gamma-glutamyl phosphate reductase (414 aa).

This sequence belongs to the gamma-glutamyl phosphate reductase family.

It is found in the cytoplasm. It carries out the reaction L-glutamate 5-semialdehyde + phosphate + NADP(+) = L-glutamyl 5-phosphate + NADPH + H(+). The protein operates within amino-acid biosynthesis; L-proline biosynthesis; L-glutamate 5-semialdehyde from L-glutamate: step 2/2. Catalyzes the NADPH-dependent reduction of L-glutamate 5-phosphate into L-glutamate 5-semialdehyde and phosphate. The product spontaneously undergoes cyclization to form 1-pyrroline-5-carboxylate. The chain is Gamma-glutamyl phosphate reductase from Kosmotoga olearia (strain ATCC BAA-1733 / DSM 21960 / TBF 19.5.1).